The chain runs to 343 residues: MTIAAAEALTRCIEHREIFHDEMLHLMRLLMRGELSPQIASALLMGLRVKKETVGEITAAAQVMREFATPVVTPNPQDLLDMCGTGGDGSHTFNISTTAMFVAAAAGVPIAKHGNRSASSSSGSADVLEALGANLQLTPEEVAECVAATGIGFMFAPAHHGAMKNVAAVRKELGVRTIFNILGPLTNPAGAANQLMGVFHPDLVGIQVRVLERLGSRHVLVVHGKDGMDEASLGAATMVGELKDGVVREYEIHPEDYGLSMMSNRGIKVSNREESRALVIEALDNVDGVARDIVALNAGLAIYAGNKADSIPEALALAFETISNGSARAKLEEFCAYTRKFQK.

5-phospho-alpha-D-ribose 1-diphosphate-binding positions include Gly84, 87-88 (GD), Thr92, 94-97 (NIST), 112-120 (KHGNRSASS), and Ser124. Gly84 provides a ligand contact to anthranilate. Ser96 is a binding site for Mg(2+). Asn115 provides a ligand contact to anthranilate. Arg170 lines the anthranilate pocket. Asp229 and Glu230 together coordinate Mg(2+).

Belongs to the anthranilate phosphoribosyltransferase family. As to quaternary structure, homodimer. Mg(2+) is required as a cofactor.

It catalyses the reaction N-(5-phospho-beta-D-ribosyl)anthranilate + diphosphate = 5-phospho-alpha-D-ribose 1-diphosphate + anthranilate. The protein operates within amino-acid biosynthesis; L-tryptophan biosynthesis; L-tryptophan from chorismate: step 2/5. In terms of biological role, catalyzes the transfer of the phosphoribosyl group of 5-phosphorylribose-1-pyrophosphate (PRPP) to anthranilate to yield N-(5'-phosphoribosyl)-anthranilate (PRA). This Bordetella bronchiseptica (strain ATCC BAA-588 / NCTC 13252 / RB50) (Alcaligenes bronchisepticus) protein is Anthranilate phosphoribosyltransferase.